A 64-amino-acid chain; its full sequence is Large ribosomal subunit protein bL32 (64 aa).

The protein belongs to the bacterial ribosomal protein bL32 family.

In Mycoplasma mobile (strain ATCC 43663 / 163K / NCTC 11711) (Mesomycoplasma mobile), this protein is Large ribosomal subunit protein bL32.